We begin with the raw amino-acid sequence, 194 residues long: Fibroblast growth factor 7 (194 aa).

Residues 1-31 form the signal peptide; that stretch reads MRKWILTWILPSLLYRSCFHIICLVGTISLA. An N-linked (GlcNAc...) asparagine glycan is attached at asparagine 45.

The protein belongs to the heparin-binding growth factors family. In terms of assembly, interacts with FGFBP1. Interacts with FGFR2. Affinity between fibroblast growth factors (FGFs) and their receptors is increased by heparan sulfate glycosaminoglycans that function as coreceptors.

Its function is as follows. Plays an important role in the regulation of embryonic development, cell proliferation and cell differentiation. Required for normal branching morphogenesis. Growth factor active on keratinocytes. Possible major paracrine effector of normal epithelial cell proliferation. This chain is Fibroblast growth factor 7 (FGF7), found in Ovis aries (Sheep).